Here is a 166-residue protein sequence, read N- to C-terminus: 2-C-methyl-D-erythritol 2,4-cyclodiphosphate synthase (166 aa).

A divalent metal cation contacts are provided by D11 and H13. Residues 11 to 13 (DVH) and 40 to 41 (HS) each bind 4-CDP-2-C-methyl-D-erythritol 2-phosphate. H48 provides a ligand contact to a divalent metal cation. 4-CDP-2-C-methyl-D-erythritol 2-phosphate-binding positions include 62–64 (DLG), 135–138 (TTSD), F142, and R145.

Belongs to the IspF family. Homotrimer. Requires a divalent metal cation as cofactor.

The enzyme catalyses 4-CDP-2-C-methyl-D-erythritol 2-phosphate = 2-C-methyl-D-erythritol 2,4-cyclic diphosphate + CMP. It participates in isoprenoid biosynthesis; isopentenyl diphosphate biosynthesis via DXP pathway; isopentenyl diphosphate from 1-deoxy-D-xylulose 5-phosphate: step 4/6. Functionally, involved in the biosynthesis of isopentenyl diphosphate (IPP) and dimethylallyl diphosphate (DMAPP), two major building blocks of isoprenoid compounds. Catalyzes the conversion of 4-diphosphocytidyl-2-C-methyl-D-erythritol 2-phosphate (CDP-ME2P) to 2-C-methyl-D-erythritol 2,4-cyclodiphosphate (ME-CPP) with a corresponding release of cytidine 5-monophosphate (CMP). This is 2-C-methyl-D-erythritol 2,4-cyclodiphosphate synthase from Pseudarthrobacter chlorophenolicus (strain ATCC 700700 / DSM 12829 / CIP 107037 / JCM 12360 / KCTC 9906 / NCIMB 13794 / A6) (Arthrobacter chlorophenolicus).